Reading from the N-terminus, the 82-residue chain is Small ribosomal subunit protein bS18 (82 aa).

Over residues 1-10 the composition is skewed to polar residues; the sequence is MTDTNQNSSR. The segment at 1–21 is disordered; sequence MTDTNQNSSRRPFHRRRKTCP.

The protein belongs to the bacterial ribosomal protein bS18 family. Part of the 30S ribosomal subunit. Forms a tight heterodimer with protein bS6.

Binds as a heterodimer with protein bS6 to the central domain of the 16S rRNA, where it helps stabilize the platform of the 30S subunit. This chain is Small ribosomal subunit protein bS18, found in Bartonella tribocorum (strain CIP 105476 / IBS 506).